Here is a 388-residue protein sequence, read N- to C-terminus: MVGTPLFSNAKKILLLGSGELGKEVIIEAQRFGVECIAVDSYENAPAMQVAHRFHVIDMKDGGALRAVIEREKPDLIVPEIEAINTDTLKELETEGYHVVPTANATKLTMDREGIRRLAFEKLGLRTAKYEFAESLEELKEAVQRIGIPCVIKPIMSSSGKGQSTIKSERDIEKSWDYAKSAARGIGTKVIVEEFIKFDYEITLLTARTSEGTKFCEPIGHIQIDGDYHESWQPHPMCAPTKAKAQEMAKKITDELGGYGIFGVELFVLDDEVIFSEVSPRPHDTGMVTMVTQKMSEFEIHARAILGLPVNVDILFPGASHVIKSEILKWAPEYEIHEASKVKDTKIRLFGKPIAKVGRRMGVALAVSDDITKARENAEKAAHLVNIK.

Residues 20 to 21 and glutamate 80 contribute to the N(1)-(5-phospho-beta-D-ribosyl)glycinamide site; that span reads EL. Residues arginine 112, lysine 153, 158–163, 193–196, and glutamate 201 contribute to the ATP site; these read SSGKGQ and EEFI. An ATP-grasp domain is found at 117–306; sequence RLAFEKLGLR…EFEIHARAIL (190 aa). The Mg(2+) site is built by glutamate 265 and glutamate 277. Residues aspartate 284, lysine 352, and 359 to 360 each bind N(1)-(5-phospho-beta-D-ribosyl)glycinamide; that span reads RR.

The protein belongs to the PurK/PurT family. In terms of assembly, homodimer.

The enzyme catalyses N(1)-(5-phospho-beta-D-ribosyl)glycinamide + formate + ATP = N(2)-formyl-N(1)-(5-phospho-beta-D-ribosyl)glycinamide + ADP + phosphate + H(+). It functions in the pathway purine metabolism; IMP biosynthesis via de novo pathway; N(2)-formyl-N(1)-(5-phospho-D-ribosyl)glycinamide from N(1)-(5-phospho-D-ribosyl)glycinamide (formate route): step 1/1. In terms of biological role, involved in the de novo purine biosynthesis. Catalyzes the transfer of formate to 5-phospho-ribosyl-glycinamide (GAR), producing 5-phospho-ribosyl-N-formylglycinamide (FGAR). Formate is provided by PurU via hydrolysis of 10-formyl-tetrahydrofolate. This chain is Formate-dependent phosphoribosylglycinamide formyltransferase, found in Methanococcus maripaludis (strain C7 / ATCC BAA-1331).